A 171-amino-acid chain; its full sequence is Large ribosomal subunit protein uL10 (171 aa).

It belongs to the universal ribosomal protein uL10 family. Part of the ribosomal stalk of the 50S ribosomal subunit. The N-terminus interacts with L11 and the large rRNA to form the base of the stalk. The C-terminus forms an elongated spine to which L12 dimers bind in a sequential fashion forming a multimeric L10(L12)X complex.

Its function is as follows. Forms part of the ribosomal stalk, playing a central role in the interaction of the ribosome with GTP-bound translation factors. The sequence is that of Large ribosomal subunit protein uL10 from Corynebacterium efficiens (strain DSM 44549 / YS-314 / AJ 12310 / JCM 11189 / NBRC 100395).